The sequence spans 539 residues: Inosine-5'-monophosphate dehydrogenase (539 aa).

CBS domains follow at residues 140 to 196 (IIVN…DMPI) and 200 to 257 (MTRE…PRAC). NAD(+)-binding positions include Asp292 and 343–345 (GIG). The K(+) site is built by Gly345 and Gly347. Ser348 serves as a coordination point for IMP. Cys350 contacts K(+). Cys350 serves as the catalytic Thioimidate intermediate. IMP-binding positions include 383 to 385 (DGG), 406 to 407 (GS), and 430 to 434 (YRGMG). Catalysis depends on Arg446, which acts as the Proton acceptor. Glu460 serves as a coordination point for IMP. K(+) is bound by residues Glu514 and His516. The interval 517 to 539 (PHDIAITQEAPNYSPDVHSGDAG) is disordered.

Belongs to the IMPDH/GMPR family. As to quaternary structure, homotetramer. The cofactor is K(+).

It catalyses the reaction IMP + NAD(+) + H2O = XMP + NADH + H(+). The protein operates within purine metabolism; XMP biosynthesis via de novo pathway; XMP from IMP: step 1/1. With respect to regulation, mycophenolic acid (MPA) is a non-competitive inhibitor that prevents formation of the closed enzyme conformation by binding to the same site as the amobile flap. In contrast, mizoribine monophosphate (MZP) is a competitive inhibitor that induces the closed conformation. MPA is a potent inhibitor of mammalian IMPDHs but a poor inhibitor of the bacterial enzymes. MZP is a more potent inhibitor of bacterial IMPDH. Catalyzes the conversion of inosine 5'-phosphate (IMP) to xanthosine 5'-phosphate (XMP), the first committed and rate-limiting step in the de novo synthesis of guanine nucleotides, and therefore plays an important role in the regulation of cell growth. The protein is Inosine-5'-monophosphate dehydrogenase of Rhodopirellula baltica (strain DSM 10527 / NCIMB 13988 / SH1).